A 389-amino-acid polypeptide reads, in one-letter code: Zip homologous protein 3 (389 aa).

Residues 6-43 (CNKCFNRKPPDGFFISSCFHIFCTKCAKADLAVCLICK) form an RING-type zinc finger. A coiled-coil region spans residues 123–164 (LAEATAWIQMAEKKLQASEEERVKAEREIEECQAKLKSMTNL). A disordered region spans residues 366 to 389 (ISSQPGYLAQRKPINGRSFIGPAD).

As to quaternary structure, interacts with zhp-4; the interaction is required for their localization along paired chromosomes and stability, and for the formation of chiasma during meiotic recombination. Expressed througout the gonad (at protein level). Expressed in the germline.

The protein localises to the chromosome. In terms of biological role, recruited co-dependently with zhp-4 to the synaptonemal complex between homologous chromosome pairs to regulate the formation and number of crossover events between homologs during meiotic recombination. In the early stages of pachytene, in complex with zhp-4, recruited by the zhp-1-zhp-2 heterodimer to designated crossover sites along the homolog pair to stabilize other pro-crossover factors such as rmh-1, msh-5 and cosa-1. This in turn facilitates crossover and promotes the formation of chiasma in each meiotic nucleus at the late pachytene stage of meiosis. Plays a role in the segregation of homologous chromosomes following the completion of crossovers. Together with him-14 and msh-5 plays a role in the activation of DNA damage-dependent apoptosis at the DNA damage checkpoint in pachytene cells. This chain is Zip homologous protein 3, found in Caenorhabditis elegans.